A 564-amino-acid polypeptide reads, in one-letter code: Kelch-like protein 12 (564 aa).

In terms of domain architecture, BTB spans 29 to 96; that stretch reads CDITLRVEGT…VYTETVLVTV (68 aa). The region spanning 131-232 is the BACK domain; it reads CLGIRDFAET…LTPRYITDVI (102 aa). Kelch repeat units lie at residues 278-325, 327-375, 376-422, 423-469, 471-516, and 518-563; these read VLLV…ALND, VYVI…TLGD, MIYV…VASG, LIYC…LLND, IYVV…VLRG, and LYAI…VLRE.

Component of the BCR(KLHL12) E3 ubiquitin ligase complex.

It localises to the cytoplasmic vesicle. It is found in the COPII-coated vesicle. It functions in the pathway protein modification; protein ubiquitination. In terms of biological role, substrate-specific adapter of a BCR (BTB-CUL3-RBX1) E3 ubiquitin ligase complex that acts as a negative regulator of Wnt signaling pathway and ER-Golgi transport. The BCR(KLHL12) complex is involved in ER-Golgi transport by regulating the size of COPII coats, thereby playing a key role in collagen export, which is required for embryonic stem (ES) cells division. Negatively regulates the Wnt signaling pathway, possibly via the targeted ubiquitination and subsequent proteolysis of dvl2 and dvl3. Regulates convergent-extension movements during early embryonic development. The protein is Kelch-like protein 12 (klhl12) of Danio rerio (Zebrafish).